The primary structure comprises 293 residues: Protein bcp-1 (293 aa).

Positions methionine 1 to lysine 12 are enriched in basic and acidic residues. The tract at residues methionine 1 to glutamate 35 is disordered. Over residues methionine 24–glutamate 35 the composition is skewed to acidic residues.

Belongs to the BCP1 family.

The protein resides in the cytoplasm. It localises to the nucleus. Its function is as follows. Involved in nuclear export, actin cytoskeleton organization and vesicular transport. This is Protein bcp-1 (bcp-1) from Neurospora crassa (strain ATCC 24698 / 74-OR23-1A / CBS 708.71 / DSM 1257 / FGSC 987).